Reading from the N-terminus, the 405-residue chain is Arginine biosynthesis bifunctional protein ArgJ (405 aa).

Substrate contacts are provided by threonine 152, lysine 178, threonine 189, glutamate 276, asparagine 400, and threonine 405. Catalysis depends on threonine 189, which acts as the Nucleophile.

Belongs to the ArgJ family. Heterotetramer of two alpha and two beta chains.

It localises to the cytoplasm. The catalysed reaction is N(2)-acetyl-L-ornithine + L-glutamate = N-acetyl-L-glutamate + L-ornithine. The enzyme catalyses L-glutamate + acetyl-CoA = N-acetyl-L-glutamate + CoA + H(+). It participates in amino-acid biosynthesis; L-arginine biosynthesis; L-ornithine and N-acetyl-L-glutamate from L-glutamate and N(2)-acetyl-L-ornithine (cyclic): step 1/1. Its pathway is amino-acid biosynthesis; L-arginine biosynthesis; N(2)-acetyl-L-ornithine from L-glutamate: step 1/4. Functionally, catalyzes two activities which are involved in the cyclic version of arginine biosynthesis: the synthesis of N-acetylglutamate from glutamate and acetyl-CoA as the acetyl donor, and of ornithine by transacetylation between N(2)-acetylornithine and glutamate. This is Arginine biosynthesis bifunctional protein ArgJ from Pseudomonas fluorescens (strain Pf0-1).